Here is a 427-residue protein sequence, read N- to C-terminus: MTVSFEKTSDTKGTLSFSIDQETIKTGLDKAFNKVKANISVPGFRKGKISRQMFNKMYGEEALFEEALNAVLPTAYDAAVKEAGIEPVAQPKIDVAKMEKGSDWELTAEVVVKPTVSLGDYKDLTVEVEATKEVSDEEVETRLTNSQNNLAELVVKETAAENGDTVVIDFVGSVDGVEFEGGKGSNHSLELGSGQFIPGFEEQLVGTKAGETVEVKVTFPENYQAEDLAGKEALFVTTVNEVKAKELPELDDELAKDIDEEVETLDELKAKFRKELEESKAEAYNDAVETAAIEAAVANAEIKEIPEEMIHEEVHRAMNEFLGGMQQQGISPEMYFQITGTSEDDLHKQYEADADKRVRTNLVIEAIAAAENFTTSDEEVKAEIEDLAGQYNMPVEQVEKLLPVDMLKHDIAMKKAVEVIATTAKVK.

The PPIase FKBP-type domain occupies 163–248 (GDTVVIDFVG…VNEVKAKELP (86 aa)).

This sequence belongs to the FKBP-type PPIase family. Tig subfamily.

Its subcellular location is the cytoplasm. The catalysed reaction is [protein]-peptidylproline (omega=180) = [protein]-peptidylproline (omega=0). In terms of biological role, involved in protein export. Acts as a chaperone by maintaining the newly synthesized protein in an open conformation. Functions as a peptidyl-prolyl cis-trans isomerase. In Lactococcus lactis subsp. lactis (strain IL1403) (Streptococcus lactis), this protein is Trigger factor (tig).